A 273-amino-acid chain; its full sequence is SPRY domain-containing SOCS box protein 1 (273 aa).

A Phosphotyrosine; by MET modification is found at Tyr-31. The B30.2/SPRY domain maps to 33-231; sequence KPTRLDLLLD…IRMRYLNGLD (199 aa). The 42-residue stretch at 232 to 273 folds into the SOCS box domain; sequence PEPLPLMDLCRRSVRLALGRERLGEIHTLPLPASLKAYLLYQ.

This sequence belongs to the SPSB family. As to quaternary structure, component of the probable ECS(SPSB1) E3 ubiquitin-protein ligase complex which contains CUL5, RNF7/RBX2, Elongin BC complex and SPSB1. Interacts with CUL5, RNF7, ELOB and ELOC. Directly interacts with MET tyrosine kinase domain in the presence and in the absence of HGF, however HGF treatment has a positive effect on this interaction. When phosphorylated, interacts with RASA1 without affecting its stability. Interacts (via B30.2/SPRY domain) with PAWR; this interaction is direct and occurs in association with the Elongin BC complex. Interacts with NOS2. Interacts with EPHB2.

The protein localises to the cytoplasm. Its subcellular location is the cytosol. It functions in the pathway protein modification; protein ubiquitination. Substrate recognition component of a SCF-like ECS (Elongin BC-CUL2/5-SOCS-box protein) E3 ubiquitin-protein ligase complex which mediates the ubiquitination and subsequent proteasomal degradation of target proteins. Negatively regulates nitric oxide (NO) production and limits cellular toxicity in activated macrophages by mediating the ubiquitination and proteasomal degradation of NOS2. Acts as a bridge which links NOS2 with the ECS E3 ubiquitin ligase complex components ELOC and CUL5. The protein is SPRY domain-containing SOCS box protein 1 (SPSB1) of Homo sapiens (Human).